The sequence spans 309 residues: ATP synthase gamma chain (309 aa).

Belongs to the ATPase gamma chain family. In terms of assembly, F-type ATPases have 2 components, CF(1) - the catalytic core - and CF(0) - the membrane proton channel. CF(1) has five subunits: alpha(3), beta(3), gamma(1), delta(1), epsilon(1). CF(0) has three main subunits: a, b and c.

It is found in the cell membrane. Functionally, produces ATP from ADP in the presence of a proton gradient across the membrane. The gamma chain is believed to be important in regulating ATPase activity and the flow of protons through the CF(0) complex. This is ATP synthase gamma chain from Salinispora tropica (strain ATCC BAA-916 / DSM 44818 / JCM 13857 / NBRC 105044 / CNB-440).